The primary structure comprises 61 residues: Small ribosomal subunit protein uS14B (61 aa).

Zn(2+) contacts are provided by C24, C27, C40, and C43.

Belongs to the universal ribosomal protein uS14 family. Zinc-binding uS14 subfamily. As to quaternary structure, part of the 30S ribosomal subunit. Contacts proteins S3 and S10. It depends on Zn(2+) as a cofactor.

Functionally, binds 16S rRNA, required for the assembly of 30S particles and may also be responsible for determining the conformation of the 16S rRNA at the A site. In Streptococcus agalactiae serotype Ia (strain ATCC 27591 / A909 / CDC SS700), this protein is Small ribosomal subunit protein uS14B.